Here is a 150-residue protein sequence, read N- to C-terminus: NmrA-like family domain-containing protein 1 (150 aa).

Residues 7–12, 33–37, and lysine 71 contribute to the NADP(+) site; these read GATGAQ and RNPEQ.

This sequence belongs to the NmrA-type oxidoreductase family. As to quaternary structure, homodimer. Interacts with ASS1. Interaction is enhanced by low NADPH/NADP(+) ratios, which results in inhibition of ASS1 activity.

It is found in the cytoplasm. The protein localises to the perinuclear region. It localises to the nucleus. Functionally, redox sensor protein. Undergoes restructuring and subcellular redistribution in response to changes in intracellular NADPH/NADP(+) levels. At low NADPH concentrations the protein is found mainly as a monomer, and binds argininosuccinate synthase (ASS1), the enzyme involved in nitric oxide synthesis. Association with ASS1 impairs its activity and reduces the production of nitric oxide, which subsecuently prevents apoptosis. Under normal NADPH concentrations, the protein is found as a dimer and hides the binding site for ASS1. The homodimer binds one molecule of NADPH. Has higher affinity for NADPH than for NADP(+). Binding to NADPH is necessary to form a stable dimer. The polypeptide is NmrA-like family domain-containing protein 1 (Rattus norvegicus (Rat)).